The primary structure comprises 309 residues: 4-hydroxy-3-methylbut-2-enyl diphosphate reductase (309 aa).

C13 contributes to the [4Fe-4S] cluster binding site. 2 residues coordinate (2E)-4-hydroxy-3-methylbut-2-enyl diphosphate: H42 and H75. H42 and H75 together coordinate dimethylallyl diphosphate. The isopentenyl diphosphate site is built by H42 and H75. A [4Fe-4S] cluster-binding site is contributed by C97. (2E)-4-hydroxy-3-methylbut-2-enyl diphosphate is bound at residue H125. Residue H125 coordinates dimethylallyl diphosphate. H125 is an isopentenyl diphosphate binding site. The Proton donor role is filled by E127. T165 provides a ligand contact to (2E)-4-hydroxy-3-methylbut-2-enyl diphosphate. C195 contributes to the [4Fe-4S] cluster binding site. (2E)-4-hydroxy-3-methylbut-2-enyl diphosphate contacts are provided by S223, S224, N225, and S267. Positions 223, 224, 225, and 267 each coordinate dimethylallyl diphosphate. 4 residues coordinate isopentenyl diphosphate: S223, S224, N225, and S267.

The protein belongs to the IspH family. [4Fe-4S] cluster is required as a cofactor.

The catalysed reaction is isopentenyl diphosphate + 2 oxidized [2Fe-2S]-[ferredoxin] + H2O = (2E)-4-hydroxy-3-methylbut-2-enyl diphosphate + 2 reduced [2Fe-2S]-[ferredoxin] + 2 H(+). It carries out the reaction dimethylallyl diphosphate + 2 oxidized [2Fe-2S]-[ferredoxin] + H2O = (2E)-4-hydroxy-3-methylbut-2-enyl diphosphate + 2 reduced [2Fe-2S]-[ferredoxin] + 2 H(+). It functions in the pathway isoprenoid biosynthesis; dimethylallyl diphosphate biosynthesis; dimethylallyl diphosphate from (2E)-4-hydroxy-3-methylbutenyl diphosphate: step 1/1. Its pathway is isoprenoid biosynthesis; isopentenyl diphosphate biosynthesis via DXP pathway; isopentenyl diphosphate from 1-deoxy-D-xylulose 5-phosphate: step 6/6. Catalyzes the conversion of 1-hydroxy-2-methyl-2-(E)-butenyl 4-diphosphate (HMBPP) into a mixture of isopentenyl diphosphate (IPP) and dimethylallyl diphosphate (DMAPP). Acts in the terminal step of the DOXP/MEP pathway for isoprenoid precursor biosynthesis. The chain is 4-hydroxy-3-methylbut-2-enyl diphosphate reductase from Chlamydia abortus (strain DSM 27085 / S26/3) (Chlamydophila abortus).